The chain runs to 143 residues: Hemoglobin subunit alpha (143 aa).

N-acetylserine is present on Ser-2. The 142-residue stretch at 2–143 (SLSDKDKAAV…VALALAEKYR (142 aa)) folds into the Globin domain. An O2-binding site is contributed by His-60. Heme b is bound at residue His-89.

Belongs to the globin family. In terms of assembly, heterotetramer of two alpha chains and two beta chains. Red blood cells.

Functionally, involved in oxygen transport from the lung to the various peripheral tissues. The sequence is that of Hemoglobin subunit alpha (hba) from Artedidraco orianae (Barbeled plunderfish).